A 500-amino-acid polypeptide reads, in one-letter code: MSLKFTNTLSKKKEDFISINPNQVKIYCCGVTVYDLCHLGHARSYLNWDVLRRFLIWKGFEVKFVQNFTDIDDKIINRANKEGCSTDELSERNIDEFHKDMDTLSILRPTSMPRATKCLHQIINFIEELEQKKVAYSSNGDVYFSVNKHKNYGKLSGREIENQIDNAAGRLKTNQKESKKNSLDFALWKKSNSGEVSYSSPWGNGRPGWHIECSAMVKQELGESIDIHLGGSDLIFPHHENEIAQSEACNGKELAKYWLHNGMVNVGGEKMSKSLGNFTTIRSLLEEGISPMTLRFFVLQTNYRKPLDFTQEALKAASKGWERLNNCLSFGYIYKIKDQAKNEIILDKPIKKSANTNLDKESFKLLSDFERYMDDDLNTSGALSILFELSQPIRKIINFLKEKDINEVDQDELNQVFYKWELLSELAAVLGLKVNLNHENPKNNPELDTNKIEELIKKRSLAKANKDFLLADKIRDDFKNIGIDLIDKPKGVTEWKQLSD.

A Zn(2+)-binding site is contributed by Cys-29. The 'HIGH' region signature appears at 31-41; the sequence is VTVYDLCHLGH. Zn(2+)-binding residues include Cys-213, His-238, and Glu-242. Positions 270–274 match the 'KMSKS' region motif; the sequence is KMSKS. Residue Lys-273 coordinates ATP.

The protein belongs to the class-I aminoacyl-tRNA synthetase family. Monomer. Zn(2+) is required as a cofactor.

The protein resides in the cytoplasm. The enzyme catalyses tRNA(Cys) + L-cysteine + ATP = L-cysteinyl-tRNA(Cys) + AMP + diphosphate. This is Cysteine--tRNA ligase from Prochlorococcus marinus (strain NATL1A).